The primary structure comprises 301 residues: Ornithine carbamoyltransferase (301 aa).

Carbamoyl phosphate is bound by residues 53–56, Q80, R104, and 131–134; these read STRT and HPCQ. L-ornithine-binding positions include N162, D221, and 225–226; that span reads SI. Carbamoyl phosphate is bound by residues 260–261 and R288; that span reads CL.

The protein belongs to the aspartate/ornithine carbamoyltransferase superfamily. OTCase family.

The protein resides in the cytoplasm. It catalyses the reaction carbamoyl phosphate + L-ornithine = L-citrulline + phosphate + H(+). Its pathway is amino-acid biosynthesis; L-arginine biosynthesis; L-arginine from L-ornithine and carbamoyl phosphate: step 1/3. In terms of biological role, reversibly catalyzes the transfer of the carbamoyl group from carbamoyl phosphate (CP) to the N(epsilon) atom of ornithine (ORN) to produce L-citrulline. The protein is Ornithine carbamoyltransferase of Cenarchaeum symbiosum (strain A).